The sequence spans 62 residues: Large ribosomal subunit protein uL30 (62 aa).

Belongs to the universal ribosomal protein uL30 family. In terms of assembly, part of the 50S ribosomal subunit.

The sequence is that of Large ribosomal subunit protein uL30 from Nitrosospira multiformis (strain ATCC 25196 / NCIMB 11849 / C 71).